Here is a 935-residue protein sequence, read N- to C-terminus: Isoleucine--tRNA ligase (935 aa).

A 'HIGH' region motif is present at residues 58–68; that stretch reads PYANGSIHVGH. Glu558 is an L-isoleucyl-5'-AMP binding site. A 'KMSKS' region motif is present at residues 599-603; sequence KMSKS. Residue Lys602 coordinates ATP. Zn(2+) contacts are provided by Cys897, Cys900, Cys917, and Cys920.

Belongs to the class-I aminoacyl-tRNA synthetase family. IleS type 1 subfamily. As to quaternary structure, monomer. Requires Zn(2+) as cofactor.

It is found in the cytoplasm. The catalysed reaction is tRNA(Ile) + L-isoleucine + ATP = L-isoleucyl-tRNA(Ile) + AMP + diphosphate. In terms of biological role, catalyzes the attachment of isoleucine to tRNA(Ile). As IleRS can inadvertently accommodate and process structurally similar amino acids such as valine, to avoid such errors it has two additional distinct tRNA(Ile)-dependent editing activities. One activity is designated as 'pretransfer' editing and involves the hydrolysis of activated Val-AMP. The other activity is designated 'posttransfer' editing and involves deacylation of mischarged Val-tRNA(Ile). The polypeptide is Isoleucine--tRNA ligase (Francisella tularensis subsp. holarctica (strain OSU18)).